The following is an 816-amino-acid chain: Stemod-13(17)-ene synthase (816 aa).

Over residues 1–10 the composition is skewed to polar residues; it reads MMLLSSSYSG. The tract at residues 1 to 24 is disordered; it reads MMLLSSSYSGGQFPGVSPLGTRPK. 5 residues coordinate Mg(2+): aspartate 553, aspartate 557, asparagine 698, threonine 702, and glutamate 706. The DDXXD motif signature appears at 553 to 557; sequence DDFFD.

The protein belongs to the terpene synthase family. Mg(2+) is required as a cofactor.

It catalyses the reaction 9alpha-copalyl diphosphate = stemod-13(17)-ene + diphosphate. In terms of biological role, catalyzes the conversion of syn-copalyl diphosphate to stemodene. The sequence is that of Stemod-13(17)-ene synthase (KSL11) from Oryza sativa subsp. indica (Rice).